Reading from the N-terminus, the 2543-residue chain is Highly reducing polyketide synthase PKS2 (2543 aa).

Residues 4-425 (EPRIAVIGLS…GSNSAILLEG (422 aa)) enclose the Ketosynthase family 3 (KS3) domain. Active-site for beta-ketoacyl synthase activity residues include C174, H309, and H349. The tract at residues 573 to 902 (VFTGQGAQHA…TYLPTLFRGT (330 aa)) is malonyl-CoA:ACP transacylase (MAT) domain. Catalysis depends on S662, which acts as the For malonyltransferase activity. The segment at 969–1101 (HPLLGRKISP…GQIEAEMTDM (133 aa)) is N-terminal hotdog fold. Positions 969 to 1281 (HPLLGRKISP…FRNIGSAEEV (313 aa)) constitute a PKS/mFAS DH domain. A dehydratase (DH) domain region spans residues 969–1283 (HPLLGRKISP…NIGSAEEVID (315 aa)). H1001 acts as the Proton acceptor; for dehydratase activity in catalysis. The interval 1119 to 1281 (TGLKEHDINA…FRNIGSAEEV (163 aa)) is C-terminal hotdog fold. The active-site Proton donor; for dehydratase activity is the D1188. The methyltransferase (CMet) domain stretch occupies residues 1438–1631 (SKVLGYLTEY…LPSRYGTDKP (194 aa)). Positions 1847-2159 (GSPDTIYFQR…SGEHMGKMVI (313 aa)) are enoylreductase (ER) domain. The ketoreductase (KR) domain stretch occupies residues 2184-2359 (ATYLVAGGTR…YTVSIALPVV (176 aa)). Residues 2463–2540 (DPLIGLTEAM…ALATEILSQR (78 aa)) form the Carrier domain. S2500 is subject to O-(pantetheine 4'-phosphoryl)serine.

It functions in the pathway secondary metabolite biosynthesis. In terms of biological role, highly reducing polyketide synthase; part of the gene cluster that mediates the biosynthesis of phomenoic acid, a long chain aliphatic carboxylic acid that does not appear to be essential for pathogenicity but may play a role in allowing to outcompete other fungi in the environmental niche via its antifungal properties. The polyketide synthase produces the long methylated aliphatic carboxylic acid chain of phomenoic acid. The cluster-specific cytochrome P450 monooxygenase may then hydroxylate the methyl group of carbon 31. The putative dehydrogenase YogA, which has no obvious role in phomenoic acid biosynthesis, may further modify phomenoic acid to produce a compound not identified yet. The polypeptide is Highly reducing polyketide synthase PKS2 (Leptosphaeria maculans (strain JN3 / isolate v23.1.3 / race Av1-4-5-6-7-8) (Blackleg fungus)).